A 376-amino-acid polypeptide reads, in one-letter code: Queuine tRNA-ribosyltransferase (376 aa).

Asp-93 (proton acceptor) is an active-site residue. Substrate contacts are provided by residues 93–97 (DSGGF), Asp-147, Gln-190, and Gly-217. An RNA binding region spans residues 248-254 (GVGTPDD). The active-site Nucleophile is the Asp-267. The segment at 272-276 (TRAGR) is RNA binding; important for wobble base 34 recognition.

This sequence belongs to the queuine tRNA-ribosyltransferase family. As to quaternary structure, homodimer. Within each dimer, one monomer is responsible for RNA recognition and catalysis, while the other monomer binds to the replacement base PreQ1.

The catalysed reaction is 7-aminomethyl-7-carbaguanine + guanosine(34) in tRNA = 7-aminomethyl-7-carbaguanosine(34) in tRNA + guanine. The protein operates within tRNA modification; tRNA-queuosine biosynthesis. Its function is as follows. Catalyzes the base-exchange of a guanine (G) residue with the queuine precursor 7-aminomethyl-7-deazaguanine (PreQ1) at position 34 (anticodon wobble position) in tRNAs with GU(N) anticodons (tRNA-Asp, -Asn, -His and -Tyr). Catalysis occurs through a double-displacement mechanism. The nucleophile active site attacks the C1' of nucleotide 34 to detach the guanine base from the RNA, forming a covalent enzyme-RNA intermediate. The proton acceptor active site deprotonates the incoming PreQ1, allowing a nucleophilic attack on the C1' of the ribose to form the product. After dissociation, two additional enzymatic reactions on the tRNA convert PreQ1 to queuine (Q), resulting in the hypermodified nucleoside queuosine (7-(((4,5-cis-dihydroxy-2-cyclopenten-1-yl)amino)methyl)-7-deazaguanosine). In Mesorhizobium japonicum (strain LMG 29417 / CECT 9101 / MAFF 303099) (Mesorhizobium loti (strain MAFF 303099)), this protein is Queuine tRNA-ribosyltransferase.